The following is a 288-amino-acid chain: MAKSGNVLNKIGSLYQSLTKSEKKIADTILRSPDLVSQCSLSEIAKHLQVGEATLVRFCRTIGFKGFSEFKLELSIELATKDNQDESILETEIMPSDDSLTIAQKLQTAVANVMEETINLLDLKQLEEVVKVLKKARRIFLFGVGSSGVTAEDAKNKLMRIGFQVDASGNNHFMYMQAALLTSSDVAIGLSHSGYSAETAHTIKIAKQNGATTVALTHSLRSPVTEYADYVLVNGNKQGKLQGDSIGTKIAQLFVLDLIYALLVQGEEDIAAQTKQKTLNVILEQRIK.

An HTH rpiR-type domain is found at 5–81; it reads GNVLNKIGSL…LELSIELATK (77 aa). The H-T-H motif DNA-binding region spans 41 to 60; it reads LSEIAKHLQVGEATLVRFCR. The SIS domain maps to 129–269; sequence VVKVLKKARR…YALLVQGEED (141 aa).

This is an uncharacterized protein from Haemophilus influenzae (strain ATCC 51907 / DSM 11121 / KW20 / Rd).